Consider the following 852-residue polypeptide: 2-deoxy-glucose resistant protein 2 (852 aa).

The segment covering 1–18 has biased composition (polar residues); the sequence is MFKSKTSTLSYDETPNSN. The segment at 1–60 is disordered; it reads MFKSKTSTLSYDETPNSNEGDRNATPVNPKEKSQTKHLNIPGDRSRHSSIADSKRSSSRY. WD repeat units follow at residues 171–210, 278–316, 318–358, 426–471, 476–515, and 651–689; these read LFKN…VKRS, EHAL…SLKT, VHPD…VSYA, QHGP…ELFK, GSSR…LSAE, and GFSS…EIRK. Ser716 is modified (phosphoserine). The interval 723–748 is disordered; that stretch reads DERSSTEDNEFSTTPPSNTHNSRPSH. Residues 733–744 show a composition bias toward polar residues; that stretch reads FSTTPPSNTHNS.

Belongs to the WD repeat DGR2 family.

In Saccharomyces cerevisiae (strain ATCC 204508 / S288c) (Baker's yeast), this protein is 2-deoxy-glucose resistant protein 2 (DGR2).